The primary structure comprises 378 residues: MKILVDENMPYARDLFSRLGEVTAVPGRPIPVAQLADADALMVRSVTKVNESLLAGKPIKFVGTATAGTDHVDEAWLKQAGIGFSAAPGCNAIAVVEYVFSSLLMLAERDGFSLHERTVGIVGVGNVGRRLQARLEALGITTLLCDPPRADRGDEGDFRSLNELVQHADILTFHTPLFKDGPYKTLHLADEKLIRSLKPGAILINACRGAVVDNTALLTCLNEGQKLSVVLDVWEGEPELNVELLKKVDIGTPHIAGYTLEGKARGTTQVFEAYSKFIGHEQHVALDTLLPAPEFGRITLHGPLDQPTLKRLVHLVYDVRRDDAPLRKVAGIPGEFDKLRKNYLERREWSSLYVICDDASAASLLCKLGFNAVHHPAR.

Substrate is bound by residues Ser45 and Thr66. Asp146 and Thr175 together coordinate NAD(+). Arg208 is a catalytic residue. Asp232 provides a ligand contact to NAD(+). Glu237 is an active-site residue. Residue His254 is the Proton donor of the active site. Residue Gly257 coordinates NAD(+). Tyr258 contributes to the substrate binding site.

It belongs to the D-isomer specific 2-hydroxyacid dehydrogenase family. PdxB subfamily. Homodimer.

Its subcellular location is the cytoplasm. The catalysed reaction is 4-phospho-D-erythronate + NAD(+) = (R)-3-hydroxy-2-oxo-4-phosphooxybutanoate + NADH + H(+). The protein operates within cofactor biosynthesis; pyridoxine 5'-phosphate biosynthesis; pyridoxine 5'-phosphate from D-erythrose 4-phosphate: step 2/5. In terms of biological role, catalyzes the oxidation of erythronate-4-phosphate to 3-hydroxy-2-oxo-4-phosphonooxybutanoate. The chain is Erythronate-4-phosphate dehydrogenase from Escherichia coli O6:K15:H31 (strain 536 / UPEC).